A 162-amino-acid polypeptide reads, in one-letter code: NADH-quinone oxidoreductase subunit I (162 aa).

4Fe-4S ferredoxin-type domains follow at residues 54–83 (RRYE…IESE) and 93–122 (TRYD…ETHI). [4Fe-4S] cluster contacts are provided by Cys63, Cys66, Cys69, Cys73, Cys102, Cys105, Cys108, and Cys112.

It belongs to the complex I 23 kDa subunit family. In terms of assembly, NDH-1 is composed of 14 different subunits. Subunits NuoA, H, J, K, L, M, N constitute the membrane sector of the complex. The cofactor is [4Fe-4S] cluster.

It localises to the cell inner membrane. It catalyses the reaction a quinone + NADH + 5 H(+)(in) = a quinol + NAD(+) + 4 H(+)(out). Functionally, NDH-1 shuttles electrons from NADH, via FMN and iron-sulfur (Fe-S) centers, to quinones in the respiratory chain. The immediate electron acceptor for the enzyme in this species is believed to be ubiquinone. Couples the redox reaction to proton translocation (for every two electrons transferred, four hydrogen ions are translocated across the cytoplasmic membrane), and thus conserves the redox energy in a proton gradient. The polypeptide is NADH-quinone oxidoreductase subunit I (Paraburkholderia xenovorans (strain LB400)).